A 354-amino-acid chain; its full sequence is Uroporphyrinogen decarboxylase (354 aa).

Substrate is bound by residues 27-31, Phe46, Asp77, Tyr154, Thr209, and His327; that span reads RQAGR.

The protein belongs to the uroporphyrinogen decarboxylase family. As to quaternary structure, homodimer.

Its subcellular location is the cytoplasm. The catalysed reaction is uroporphyrinogen III + 4 H(+) = coproporphyrinogen III + 4 CO2. Its pathway is porphyrin-containing compound metabolism; protoporphyrin-IX biosynthesis; coproporphyrinogen-III from 5-aminolevulinate: step 4/4. Functionally, catalyzes the decarboxylation of four acetate groups of uroporphyrinogen-III to yield coproporphyrinogen-III. This is Uroporphyrinogen decarboxylase from Salmonella typhi.